The primary structure comprises 303 residues: Protoheme IX farnesyltransferase (303 aa).

A run of 7 helical transmembrane segments spans residues Met25 to Leu45, Ile54 to Leu74, Leu118 to Val138, Trp151 to Ile171, Leu177 to Leu197, Leu230 to Leu250, and Phe280 to Ile300.

Belongs to the UbiA prenyltransferase family. Protoheme IX farnesyltransferase subfamily. In terms of assembly, interacts with CtaA.

It localises to the cell membrane. It carries out the reaction heme b + (2E,6E)-farnesyl diphosphate + H2O = Fe(II)-heme o + diphosphate. It participates in porphyrin-containing compound metabolism; heme O biosynthesis; heme O from protoheme: step 1/1. Converts heme B (protoheme IX) to heme O by substitution of the vinyl group on carbon 2 of heme B porphyrin ring with a hydroxyethyl farnesyl side group. The sequence is that of Protoheme IX farnesyltransferase from Staphylococcus saprophyticus subsp. saprophyticus (strain ATCC 15305 / DSM 20229 / NCIMB 8711 / NCTC 7292 / S-41).